The following is a 293-amino-acid chain: Probable 2-(5''-triphosphoribosyl)-3'-dephosphocoenzyme-A synthase (293 aa).

It belongs to the CitG/MdcB family.

The catalysed reaction is 3'-dephospho-CoA + ATP = 2'-(5''-triphospho-alpha-D-ribosyl)-3'-dephospho-CoA + adenine. Functionally, involved in the formation of 2-(5''-phosphoribosyl)-3'-dephosphocoenzyme-A, the prosthetic group of the acyl-carrier protein of the malonate decarboxylase. This chain is Probable 2-(5''-triphosphoribosyl)-3'-dephosphocoenzyme-A synthase, found in Pseudomonas paraeruginosa (strain DSM 24068 / PA7) (Pseudomonas aeruginosa (strain PA7)).